A 308-amino-acid polypeptide reads, in one-letter code: Acetylglutamate kinase (308 aa).

Substrate contacts are provided by residues 67–68 (GG), Arg-89, and Asn-193.

The protein belongs to the acetylglutamate kinase family. ArgB subfamily.

It is found in the cytoplasm. The catalysed reaction is N-acetyl-L-glutamate + ATP = N-acetyl-L-glutamyl 5-phosphate + ADP. It functions in the pathway amino-acid biosynthesis; L-arginine biosynthesis; N(2)-acetyl-L-ornithine from L-glutamate: step 2/4. Its function is as follows. Catalyzes the ATP-dependent phosphorylation of N-acetyl-L-glutamate. The chain is Acetylglutamate kinase from Nitratidesulfovibrio vulgaris (strain DP4) (Desulfovibrio vulgaris).